The following is a 188-amino-acid chain: Zinc finger protein 428 (188 aa).

Residues 1 to 162 are disordered; the sequence is MTETREPAET…EEEEEEGTYH (162 aa). Acidic residues predominate over residues 40 to 61; sequence PDSEEEEDEEEEEEETTDDPEY. The span at 84-94 shows a compositional bias: low complexity; it reads RAAQPPAQPCQ. Residue Thr-108 is modified to Phosphothreonine. Residues 116–129 are compositionally biased toward low complexity; that stretch reads PATAPQEAPAPEGR. Over residues 138-149 the composition is skewed to basic and acidic residues; that stretch reads PPRAGEGRPAGR. Residues 161 to 183 form a C2H2-type zinc finger; it reads YHCTECEDSFDNLGELHGHFMLH.

The sequence is that of Zinc finger protein 428 (ZNF428) from Homo sapiens (Human).